The primary structure comprises 269 residues: Subtilisin Savinase (269 aa).

Q2 is a Ca(2+) binding site. The 264-residue stretch at 5 to 268 (PWGISRVQAP…SGLVNAEAAT (264 aa)) folds into the Peptidase S8 domain. The Charge relay system role is filled by D32. Residue D40 participates in Ca(2+) binding. H62 acts as the Charge relay system in catalysis. Ca(2+)-binding residues include L73, N75, I77, V79, A163, Y165, and A168. S215 serves as the catalytic Charge relay system.

It belongs to the peptidase S8 family. The cofactor is Ca(2+).

It is found in the secreted. It catalyses the reaction Hydrolysis of proteins with broad specificity for peptide bonds, and a preference for a large uncharged residue in P1. Hydrolyzes peptide amides.. Its function is as follows. Subtilisin is an extracellular alkaline serine protease, it catalyzes the hydrolysis of proteins and peptide amides. The polypeptide is Subtilisin Savinase (Lederbergia lenta (Bacillus lentus)).